The primary structure comprises 586 residues: Aspartate--tRNA ligase (586 aa).

An L-aspartate-binding site is contributed by E171. The interval 195–198 (QLFK) is aspartate. R217 is an L-aspartate binding site. ATP-binding positions include 217 to 219 (RDE) and Q226. H448 contacts L-aspartate. ATP is bound at residue E482. L-aspartate is bound at residue R489. Residue 534 to 537 (GLDR) participates in ATP binding.

It belongs to the class-II aminoacyl-tRNA synthetase family. Type 1 subfamily. In terms of assembly, homodimer.

It is found in the cytoplasm. It carries out the reaction tRNA(Asp) + L-aspartate + ATP = L-aspartyl-tRNA(Asp) + AMP + diphosphate. Functionally, catalyzes the attachment of L-aspartate to tRNA(Asp) in a two-step reaction: L-aspartate is first activated by ATP to form Asp-AMP and then transferred to the acceptor end of tRNA(Asp). The chain is Aspartate--tRNA ligase from Buchnera aphidicola subsp. Acyrthosiphon pisum (strain APS) (Acyrthosiphon pisum symbiotic bacterium).